The chain runs to 348 residues: Phosphate acyltransferase (348 aa).

It belongs to the PlsX family. In terms of assembly, homodimer. Probably interacts with PlsY.

It is found in the cytoplasm. It catalyses the reaction a fatty acyl-[ACP] + phosphate = an acyl phosphate + holo-[ACP]. It participates in lipid metabolism; phospholipid metabolism. Its function is as follows. Catalyzes the reversible formation of acyl-phosphate (acyl-PO(4)) from acyl-[acyl-carrier-protein] (acyl-ACP). This enzyme utilizes acyl-ACP as fatty acyl donor, but not acyl-CoA. This chain is Phosphate acyltransferase, found in Rhizorhabdus wittichii (strain DSM 6014 / CCUG 31198 / JCM 15750 / NBRC 105917 / EY 4224 / RW1) (Sphingomonas wittichii).